The sequence spans 152 residues: Large ribosomal subunit protein bL9 (152 aa).

This sequence belongs to the bacterial ribosomal protein bL9 family.

Binds to the 23S rRNA. This chain is Large ribosomal subunit protein bL9, found in Parasynechococcus marenigrum (strain WH8102).